The chain runs to 493 residues: Probable NADPH:adrenodoxin oxidoreductase, mitochondrial (493 aa).

The FAD site is built by Ser26, Glu48, Leu56, and Ile100. Residues 177-180, 223-224, and Glu235 each bind NADP(+); these read NGNV and RR. FAD contacts are provided by residues Trp407 and 414-416; that span reads GVI. Gly414 provides a ligand contact to NADP(+).

The protein belongs to the ferredoxin--NADP reductase type 1 family. It depends on FAD as a cofactor.

The protein localises to the mitochondrion inner membrane. It catalyses the reaction 2 reduced [adrenodoxin] + NADP(+) + H(+) = 2 oxidized [adrenodoxin] + NADPH. Functionally, adrenodoxin reductase transfers electrons from NADPH to adrenodoxin, which is involved in heme A biosynthesis and in iron-sulfur cluster assembly. Involved in the electron transfer to heme A synthase COX15, a heme protein that catalyzes the conversion of heme O to heme A. Required for the de novo synthesis of Fe-S clusters on iron sulfur cluster assembly protein ISU1. Involved in electron delivery for Fe-S cluster synthesis. Essential for coenzyme Q biosynthesis. May be involved in the electron transfer required for the hydroxylation reaction performed by COQ6. May play a role in cellular and mitochondrial iron homeostasis. The protein is Probable NADPH:adrenodoxin oxidoreductase, mitochondrial of Saccharomyces cerevisiae (strain ATCC 204508 / S288c) (Baker's yeast).